A 334-amino-acid polypeptide reads, in one-letter code: Cytoskeleton protein RodZ (334 aa).

Topologically, residues 1–111 (MNTEATHDQN…LGKRRKKRDG (111 aa)) are cytoplasmic. The HTH cro/C1-type domain maps to 19 to 71 (LRNAREQLGLSQQAVAERLCLKVSTVRDIEEDKAPSDLASTFLRGYIRSYARL). The segment at residues 30–49 (QQAVAERLCLKVSTVRDIEE) is a DNA-binding region (H-T-H motif). Residues 112-132 (WLMSFTWLVLFVVVGLTGAWW) form a helical; Signal-anchor for type II membrane protein membrane-spanning segment. Topologically, residues 133 to 334 (WQNHKAQQEE…TLNAEPTPAQ (202 aa)) are periplasmic. The segment at 154–241 (LNADKDSGQS…PSALPTSQAG (88 aa)) is disordered. 2 stretches are compositionally biased toward low complexity: residues 176 to 211 (TTPAQTAPAPATPVDSTAATQTPAPTAAATQNTVVA) and 219 to 241 (TAATSAAPAATETPSALPTSQAG).

This sequence belongs to the RodZ family.

It localises to the cell inner membrane. Its function is as follows. Cytoskeletal protein that is involved in cell-shape control through regulation of the length of the long axis. This chain is Cytoskeleton protein RodZ, found in Salmonella choleraesuis (strain SC-B67).